The sequence spans 163 residues: Protein YtsP (163 aa).

The protein belongs to the free Met sulfoxide reductase family.

The sequence is that of Protein YtsP (ytsP) from Bacillus subtilis (strain 168).